The primary structure comprises 478 residues: Putative sulfate transporter YbaR (478 aa).

The next 12 membrane-spanning stretches (helical) occupy residues 19–39, 42–62, 65–85, 87–107, 121–141, 143–163, 168–188, 220–240, 259–279, 295–315, 345–365, and 366–386; these read ILAG…FSII, VDPM…SIFG, PGMI…LVAD, GLQY…ILGI, VMIG…LPQF, GASW…YVLP, AVPS…TFHV, IIFP…LLTA, GQGI…CAMI, SAFV…HVVV, APLT…VTDD, and LSKG…AKIS. The region spanning 389 to 478 is the STAS domain; the sequence is KIVSHAEDQK…ASKSLMKQMA (90 aa).

It belongs to the SLC26A/SulP transporter (TC 2.A.53) family.

It is found in the cell membrane. The polypeptide is Putative sulfate transporter YbaR (ybaR) (Bacillus subtilis (strain 168)).